A 456-amino-acid chain; its full sequence is Membrane-bound lytic murein transglycosylase F (456 aa).

The first 22 residues, 1-22, serve as a signal peptide directing secretion; that stretch reads MKTWPSRAVSLLLLALALPVGC. The tract at residues 23-267 is non-LT domain; it reads SEPPPPVRDP…ALDETWFGRF (245 aa). Residues 268-456 form an LT domain region; that stretch reads GDYDYVDVAR…YRALLAAQDL (189 aa). E314 is an active-site residue.

The protein in the N-terminal section; belongs to the bacterial solute-binding protein 3 family. It in the C-terminal section; belongs to the transglycosylase Slt family.

The protein resides in the cell outer membrane. The enzyme catalyses Exolytic cleavage of the (1-&gt;4)-beta-glycosidic linkage between N-acetylmuramic acid (MurNAc) and N-acetylglucosamine (GlcNAc) residues in peptidoglycan, from either the reducing or the non-reducing ends of the peptidoglycan chains, with concomitant formation of a 1,6-anhydrobond in the MurNAc residue.. Its function is as follows. Murein-degrading enzyme that degrades murein glycan strands and insoluble, high-molecular weight murein sacculi, with the concomitant formation of a 1,6-anhydromuramoyl product. Lytic transglycosylases (LTs) play an integral role in the metabolism of the peptidoglycan (PG) sacculus. Their lytic action creates space within the PG sacculus to allow for its expansion as well as for the insertion of various structures such as secretion systems and flagella. This chain is Membrane-bound lytic murein transglycosylase F, found in Maricaulis maris (strain MCS10) (Caulobacter maris).